We begin with the raw amino-acid sequence, 443 residues long: Methyl-coenzyme M reductase subunit beta (443 aa).

Tyrosine 367 serves as a coordination point for coenzyme M. Residue glycine 369 coordinates coenzyme B.

This sequence belongs to the methyl-coenzyme M reductase beta subunit family. MCR is a hexamer of two alpha, two beta, and two gamma chains, forming a dimer of heterotrimers. It depends on coenzyme F430 as a cofactor.

The protein resides in the cytoplasm. The catalysed reaction is coenzyme B + methyl-coenzyme M = methane + coenzyme M-coenzyme B heterodisulfide. It participates in one-carbon metabolism; methyl-coenzyme M reduction; methane from methyl-coenzyme M: step 1/1. In terms of biological role, component of the methyl-coenzyme M reductase (MCR) I that catalyzes the reductive cleavage of methyl-coenzyme M (CoM-S-CH3 or 2-(methylthio)ethanesulfonate) using coenzyme B (CoB or 7-mercaptoheptanoylthreonine phosphate) as reductant which results in the production of methane and the mixed heterodisulfide of CoB and CoM (CoM-S-S-CoB). This is the final step in methanogenesis. The protein is Methyl-coenzyme M reductase subunit beta (mcrB) of Methanococcus voltae.